The following is a 325-amino-acid chain: Acetyl-coenzyme A carboxylase carboxyl transferase subunit alpha (325 aa).

The CoA carboxyltransferase C-terminal domain occupies 35-292 (EIEKLEARLT…DRVLRASLKQ (258 aa)).

It belongs to the AccA family. In terms of assembly, acetyl-CoA carboxylase is a heterohexamer composed of biotin carboxyl carrier protein (AccB), biotin carboxylase (AccC) and two subunits each of ACCase subunit alpha (AccA) and ACCase subunit beta (AccD).

It is found in the cytoplasm. The catalysed reaction is N(6)-carboxybiotinyl-L-lysyl-[protein] + acetyl-CoA = N(6)-biotinyl-L-lysyl-[protein] + malonyl-CoA. It functions in the pathway lipid metabolism; malonyl-CoA biosynthesis; malonyl-CoA from acetyl-CoA: step 1/1. Functionally, component of the acetyl coenzyme A carboxylase (ACC) complex. First, biotin carboxylase catalyzes the carboxylation of biotin on its carrier protein (BCCP) and then the CO(2) group is transferred by the carboxyltransferase to acetyl-CoA to form malonyl-CoA. The protein is Acetyl-coenzyme A carboxylase carboxyl transferase subunit alpha of Geobacillus thermodenitrificans (strain NG80-2).